A 102-amino-acid polypeptide reads, in one-letter code: Acid shock protein (102 aa).

An N-terminal signal peptide occupies residues 1–21 (MKKVLALVVAAAMGLSSAAFA). Low complexity predominate over residues 22–41 (AETATTPAPTATTTKAAPAK). Positions 22 to 58 (AETATTPAPTATTTKAAPAKTTHHKKQHKAAPAQKAQ) are excised as a propeptide. The tract at residues 22–102 (AETATTPAPT…PAKPAAQPAA (81 aa)) is disordered. Basic residues predominate over residues 80–90 (AAKKHAKKHSH). The span at 91–102 (QQPAKPAAQPAA) shows a compositional bias: low complexity.

It belongs to the Asr family. Post-translationally, proteolytic processing gives rise to the active protein.

The protein localises to the periplasm. Required for growth and/or survival at acidic conditions. The protein is Acid shock protein of Escherichia coli O17:K52:H18 (strain UMN026 / ExPEC).